The sequence spans 166 residues: Putative 4-hydroxy-4-methyl-2-oxoglutarate aldolase 1 (166 aa).

The residue at position 2 (Ala2) is an N-acetylalanine. Residues 81–84 and Arg103 contribute to the substrate site; that span reads GGNP. Asp104 is a binding site for a divalent metal cation.

It belongs to the class II aldolase/RraA-like family. As to quaternary structure, homotrimer. Requires a divalent metal cation as cofactor.

It catalyses the reaction 4-hydroxy-4-methyl-2-oxoglutarate = 2 pyruvate. It carries out the reaction oxaloacetate + H(+) = pyruvate + CO2. Functionally, catalyzes the aldol cleavage of 4-hydroxy-4-methyl-2-oxoglutarate (HMG) into 2 molecules of pyruvate. Also contains a secondary oxaloacetate (OAA) decarboxylase activity due to the common pyruvate enolate transition state formed following C-C bond cleavage in the retro-aldol and decarboxylation reactions. The polypeptide is Putative 4-hydroxy-4-methyl-2-oxoglutarate aldolase 1 (Arabidopsis thaliana (Mouse-ear cress)).